Consider the following 463-residue polypeptide: Dihydrolipoyllysine-residue succinyltransferase component of 2-oxoglutarate dehydrogenase complex, mitochondrial (463 aa).

The Lipoyl-binding domain maps to 73–148 (STSIEVPPMA…TVGEELAQVE (76 aa)). Lys-114 carries the N6-lipoyllysine modification. A disordered region spans residues 144–237 (LAQVEPGEAP…FTPFPRTETR (94 aa)). A compositionally biased stretch (low complexity) spans 148 to 157 (EPGEAPAEGS). Over residues 184 to 212 (TASKKEAAPKKEAAPKKEVTEPKKADQPK) the composition is skewed to basic and acidic residues. 3 repeat units span residues 185–190 (ASKKEA), 191–196 (APKKEA), and 197–202 (APKKEV). Positions 185-209 (ASKKEAAPKKEAAPKKEVTEPKKAD) are 4 X 6 AA approximate tandem repeats of A-[SP]-K-K-E-[AV]. One copy of the 4; approximate repeat lies at 204–209 (EPKKAD). Position 340 is a phosphothreonine (Thr-340). Residues His-435 and Asp-439 contribute to the active site.

The protein belongs to the 2-oxoacid dehydrogenase family. As to quaternary structure, component of the 2-oxoglutarate dehydrogenase complex (OGDC), also called alpha-ketoglutarate dehydrogenase (KGDH) complex. The copmplex is composed of the catalytic subunits OGDH (2-oxoglutarate dehydrogenase KGD1; also called E1 subunit), DLST (dihydrolipoamide succinyltransferase KGD2; also called E2 subunit) and DLD (dihydrolipoamide dehydrogenase LPD1; also called E3 subunit), and the assembly factor KGD4. Requires (R)-lipoate as cofactor.

The protein resides in the mitochondrion. It catalyses the reaction N(6)-[(R)-dihydrolipoyl]-L-lysyl-[protein] + succinyl-CoA = N(6)-[(R)-S(8)-succinyldihydrolipoyl]-L-lysyl-[protein] + CoA. Its pathway is amino-acid degradation; L-lysine degradation via saccharopine pathway; glutaryl-CoA from L-lysine: step 6/6. Functionally, the 2-oxoglutarate dehydrogenase complex catalyzes the overall conversion of 2-oxoglutarate to succinyl-CoA and CO(2). It contains multiple copies of three enzymatic components: 2-oxoglutarate dehydrogenase (E1), dihydrolipoamide succinyltransferase (E2) and lipoamide dehydrogenase (E3). The polypeptide is Dihydrolipoyllysine-residue succinyltransferase component of 2-oxoglutarate dehydrogenase complex, mitochondrial (KGD2) (Saccharomyces cerevisiae (strain ATCC 204508 / S288c) (Baker's yeast)).